We begin with the raw amino-acid sequence, 537 residues long: Methylmalonate-semialdehyde/malonate-semialdehyde dehydrogenase [acylating], mitochondrial (537 aa).

A mitochondrion-targeting transit peptide spans 1 to 34 (MAAVAVAAAAAALRARILQVSSKVNSSWQPASSF). Lys49, Lys54, Lys57, and Lys78 each carry N6-acetyllysine; alternate. N6-succinyllysine; alternate is present on residues Lys49, Lys54, Lys57, and Lys78. Lys89 carries the N6-acetyllysine modification. N6-acetyllysine; alternate occurs at positions 119 and 131. N6-succinyllysine; alternate occurs at positions 119 and 131. Positions 185, 187, 211, 214, 215, and 264 each coordinate NAD(+). A Phosphoserine modification is found at Ser264. Lys300 is subject to N6-acetyllysine. Cys319 functions as the Nucleophile in the catalytic mechanism. N6-acetyllysine is present on residues Lys332 and Lys333. N6-acetyllysine; alternate occurs at positions 366 and 378. An N6-succinyllysine; alternate mark is found at Lys366 and Lys378. At Ser382 the chain carries Phosphoserine. Lys393 is subject to N6-succinyllysine. Residue Glu419 participates in NAD(+) binding. Position 502 is an N6-acetyllysine (Lys502). At Lys519 the chain carries N6-succinyllysine.

This sequence belongs to the aldehyde dehydrogenase family. Homodimer. Post-translationally, the N-terminus is blocked.

It localises to the mitochondrion. The enzyme catalyses 2-methyl-3-oxopropanoate + NAD(+) + CoA + H2O = propanoyl-CoA + hydrogencarbonate + NADH + H(+). It catalyses the reaction 3-oxopropanoate + NAD(+) + CoA + H2O = hydrogencarbonate + acetyl-CoA + NADH + H(+). The catalysed reaction is (R)-2-methyl-3-oxopropanoate + NAD(+) + CoA + H2O = propanoyl-CoA + hydrogencarbonate + NADH + H(+). It carries out the reaction (S)-2-methyl-3-oxopropanoate + NAD(+) + CoA + H2O = propanoyl-CoA + hydrogencarbonate + NADH + H(+). Functionally, malonate and methylmalonate semialdehyde dehydrogenase involved in the catabolism of valine, thymine, and compounds catabolized by way of beta-alanine, including uracil and cytidine. In Bos taurus (Bovine), this protein is Methylmalonate-semialdehyde/malonate-semialdehyde dehydrogenase [acylating], mitochondrial (ALDH6A1).